The primary structure comprises 514 residues: 2-isopropylmalate synthase (514 aa).

A Pyruvate carboxyltransferase domain is found at 4–266 (INVFDTSLRD…KTGLKLSELK (263 aa)). The Mn(2+) site is built by aspartate 13, histidine 201, histidine 203, and asparagine 237. The tract at residues 390–514 (ELTALQVTYG…AKREMAKVES (125 aa)) is regulatory domain.

The protein belongs to the alpha-IPM synthase/homocitrate synthase family. LeuA type 1 subfamily. In terms of assembly, homodimer. The cofactor is Mn(2+).

The protein localises to the cytoplasm. The catalysed reaction is 3-methyl-2-oxobutanoate + acetyl-CoA + H2O = (2S)-2-isopropylmalate + CoA + H(+). The protein operates within amino-acid biosynthesis; L-leucine biosynthesis; L-leucine from 3-methyl-2-oxobutanoate: step 1/4. Its function is as follows. Catalyzes the condensation of the acetyl group of acetyl-CoA with 3-methyl-2-oxobutanoate (2-ketoisovalerate) to form 3-carboxy-3-hydroxy-4-methylpentanoate (2-isopropylmalate). The chain is 2-isopropylmalate synthase from Shouchella clausii (strain KSM-K16) (Alkalihalobacillus clausii).